Here is a 388-residue protein sequence, read N- to C-terminus: Succinate--CoA ligase [ADP-forming] subunit beta (388 aa).

Positions Lys9–His244 constitute an ATP-grasp domain. Residues Lys46, Gly53–Gly55, Glu99, Thr102, and Glu107 contribute to the ATP site. 2 residues coordinate Mg(2+): Asn199 and Asp213. Substrate contacts are provided by residues Asn264 and Gly321–Val323.

The protein belongs to the succinate/malate CoA ligase beta subunit family. As to quaternary structure, heterotetramer of two alpha and two beta subunits. It depends on Mg(2+) as a cofactor.

The catalysed reaction is succinate + ATP + CoA = succinyl-CoA + ADP + phosphate. The enzyme catalyses GTP + succinate + CoA = succinyl-CoA + GDP + phosphate. It functions in the pathway carbohydrate metabolism; tricarboxylic acid cycle; succinate from succinyl-CoA (ligase route): step 1/1. Functionally, succinyl-CoA synthetase functions in the citric acid cycle (TCA), coupling the hydrolysis of succinyl-CoA to the synthesis of either ATP or GTP and thus represents the only step of substrate-level phosphorylation in the TCA. The beta subunit provides nucleotide specificity of the enzyme and binds the substrate succinate, while the binding sites for coenzyme A and phosphate are found in the alpha subunit. The polypeptide is Succinate--CoA ligase [ADP-forming] subunit beta (Marinomonas sp. (strain MWYL1)).